Here is a 204-residue protein sequence, read N- to C-terminus: Leucyl/phenylalanyl-tRNA--protein transferase (204 aa).

This sequence belongs to the L/F-transferase family.

It is found in the cytoplasm. It carries out the reaction N-terminal L-lysyl-[protein] + L-leucyl-tRNA(Leu) = N-terminal L-leucyl-L-lysyl-[protein] + tRNA(Leu) + H(+). The catalysed reaction is N-terminal L-arginyl-[protein] + L-leucyl-tRNA(Leu) = N-terminal L-leucyl-L-arginyl-[protein] + tRNA(Leu) + H(+). It catalyses the reaction L-phenylalanyl-tRNA(Phe) + an N-terminal L-alpha-aminoacyl-[protein] = an N-terminal L-phenylalanyl-L-alpha-aminoacyl-[protein] + tRNA(Phe). Functions in the N-end rule pathway of protein degradation where it conjugates Leu, Phe and, less efficiently, Met from aminoacyl-tRNAs to the N-termini of proteins containing an N-terminal arginine or lysine. The chain is Leucyl/phenylalanyl-tRNA--protein transferase from Brucella abortus (strain 2308).